The sequence spans 488 residues: Regulatory protein ViaA (488 aa).

This sequence belongs to the ViaA family. In terms of assembly, homodimer. Interacts with RavA.

Its subcellular location is the cytoplasm. In terms of biological role, component of the RavA-ViaA chaperone complex, which may act on the membrane to optimize the function of some of the respiratory chains. ViaA stimulates the ATPase activity of RavA. This chain is Regulatory protein ViaA, found in Yersinia pseudotuberculosis serotype O:1b (strain IP 31758).